A 131-amino-acid polypeptide reads, in one-letter code: MKKHGVLNSEIAAVLASLGHTDTVVIADCGLPIPDGVKRIDLAVEIGKPSFLEVLQVVADDMAIEKVTLAEEVIINNAEVNKEIEQKLIEPAFEYVSHEQFKEHTKKAKAIIRTGEATPYANVILHAGVIF.

Histidine 20 serves as the catalytic Proton donor. Residues aspartate 28, histidine 98, and 120-122 (YAN) each bind substrate.

The protein belongs to the RbsD / FucU family. RbsD subfamily. As to quaternary structure, homodecamer.

It is found in the cytoplasm. It catalyses the reaction beta-D-ribopyranose = beta-D-ribofuranose. It participates in carbohydrate metabolism; D-ribose degradation; D-ribose 5-phosphate from beta-D-ribopyranose: step 1/2. Its function is as follows. Catalyzes the interconversion of beta-pyran and beta-furan forms of D-ribose. The protein is D-ribose pyranase of Bacillus cereus (strain G9842).